A 729-amino-acid chain; its full sequence is Leucine-rich repeat flightless-interacting protein 2 (729 aa).

Residues 27–69 (IAREAEARLAAKRAARAEARDIRMRELERQQKELTHRYHDKKW) are a coiled coil. 3 disordered regions span residues 80 to 156 (DHAR…SSSH), 230 to 268 (SARS…ESAA), and 289 to 344 (IPDL…CSLD). Residues 84–93 (HLQRSSHRHS) are compositionally biased toward basic residues. Positions 99-110 (VTPNHRSSSVDV) are enriched in polar residues. Residues 115 to 126 (RGRESISRRRDS) show a composition bias toward basic and acidic residues. Low complexity-rich tracts occupy residues 137–147 (RTSNSYSNSYD) and 257–268 (SSDFSDQSESAA). A compositionally biased stretch (polar residues) spans 304-320 (TTENYSRPSSRNATSGI). 2 coiled-coil regions span residues 357–531 (DLKD…IGEK) and 574–722 (LDVR…KANR). A disordered region spans residues 600-621 (DDERQKSAKNNSTTTDPTGLEN). A compositionally biased stretch (polar residues) spans 607 to 616 (AKNNSTTTDP).

Belongs to the LRRFIP family.

May function as activator of the canonical Wnt signaling pathway upstream of ctnnb1/beta-catenin. Might be required for dorsal axis formation. This Xenopus laevis (African clawed frog) protein is Leucine-rich repeat flightless-interacting protein 2 (lrrfip2).